A 336-amino-acid polypeptide reads, in one-letter code: MGNCLKPLKEQPPSASPKPLTIPSSSVEPVKENLKEFRFAELNKATKRFRKYMVIKGNDNGFTRTFYEGCINETTFAPSRTGITVSVMECYQDNSQTLQDWKEEVKSLGRISHPNLVKLLGYCCEENKSFLVFEYLHKGSLNRYIFGKEEEALPWETRVKIAIGAAQSIAFLHWVKNSALYRELRMYNILLDEHYNTKLFYLGSKKLCLLEESVTTAFIGRTVYIPPEYVISGHLGTKSDVYTFGVILLEILTGLKASDGKKNENMQSLHVWTKPFLSDQSKIREIIDPRLGNDYPVNAATQMGKLIKRCIKLDTRKRPSMQQVFDGLNDIAEIKD.

The tract at residues 1 to 25 is disordered; it reads MGNCLKPLKEQPPSASPKPLTIPSS. Residue G2 is the site of N-myristoyl glycine attachment. C4 is lipidated: S-palmitoyl cysteine. Residues 52–332 enclose the Protein kinase domain; that stretch reads YMVIKGNDNG…QVFDGLNDIA (281 aa).

It belongs to the protein kinase superfamily. Ser/Thr protein kinase family. Component of an immune signaling complex made of, at least, SZE1, BKN2/SZE2, ZAR1 and ZED1. Interacts directly with ZAR1 and Pseudomonas syringae HOPZ1A at the plasma membrane. In terms of processing, N-terminal myristoylation is critical for plasma membrane localization and implication in defense responses. In terms of tissue distribution, expressed in stigma and ovaries in flowers, and in stems and seedlings.

It is found in the cell membrane. Functionally, together with SZE1 and ZED1, required for effector-triggered immunity (e.g. Pseudomonas syringae type III effector HopZ1a) via the activation of ZAR1, thus being essential for resistance against P. syringae pv. tomato DC3000 expressing HopZ1a. Collaboratively with BKN1, involved in compatible pollen-stigma interactions. This Arabidopsis thaliana (Mouse-ear cress) protein is Inactive serine/threonine-protein kinase BKN2.